The primary structure comprises 298 residues: Probable prolyl 4-hydroxylase 4 (298 aa).

Over 1–6 (MARRGL) the chain is Cytoplasmic. Residues 7 to 25 (LISFFAIFSVLLQSSTSLI) form a helical; Signal-anchor for type II membrane protein membrane-spanning segment. Residues 26-298 (SSSSVFVNPS…GYCRRSCKAC (273 aa)) are Lumenal-facing. Residue Asn77 is glycosylated (N-linked (GlcNAc...) asparagine). A Fe2OG dioxygenase domain is found at 120–245 (NGEDIQVLRY…KWSATKWIHV (126 aa)). 2 residues coordinate Fe cation: His138 and Asp140. Asn164 carries an N-linked (GlcNAc...) asparagine glycan. His226 provides a ligand contact to Fe cation. Residue Lys236 coordinates 2-oxoglutarate. 2 N-linked (GlcNAc...) asparagine glycosylation sites follow: Asn257 and Asn262. Residues 258-298 (CTDMNESCERWAVLGECTKNPEYMVGTTELPGYCRRSCKAC) enclose the ShKT domain. Disulfide bonds link Cys258–Cys298, Cys265–Cys291, and Cys274–Cys295.

Belongs to the P4HA family. The cofactor is Fe(2+). L-ascorbate serves as cofactor.

Its subcellular location is the endoplasmic reticulum membrane. It catalyses the reaction L-prolyl-[collagen] + 2-oxoglutarate + O2 = trans-4-hydroxy-L-prolyl-[collagen] + succinate + CO2. Its function is as follows. Catalyzes the post-translational formation of 4-hydroxyproline in -Xaa-Pro-Gly- sequences in proline-rich peptide sequences of plant glycoproteins and other proteins. Hydroxyprolines are important constituent of many plant cell wall glycoproteins such as extensins, hydroxyproline-rich glycoproteins, lectins and arabinogalactan proteins. In Arabidopsis thaliana (Mouse-ear cress), this protein is Probable prolyl 4-hydroxylase 4.